Reading from the N-terminus, the 270-residue chain is Eukaryotic translation initiation factor 2 subunit beta (270 aa).

A disordered region spans residues 1–38 (MADEEQMERKEEATEIAPFDPTKKKKKKKVVIQDPADE).

The protein belongs to the eIF-2-beta/eIF-5 family. As to quaternary structure, eukaryotic translation initiation factor 2 eIF2 is a heterotrimeric complex composed of an alpha, a beta and a gamma subunit.

It is found in the cytoplasm. It localises to the cytosol. In terms of biological role, component of the eIF2 complex that functions in the early steps of protein synthesis by forming a ternary complex with GTP and initiator tRNA. This complex binds to a 40S ribosomal subunit, followed by mRNA binding to form a 43S pre-initiation complex (43S PIC). Junction of the 60S ribosomal subunit to form the 80S initiation complex is preceded by hydrolysis of the GTP bound to eIF2 and release of an eIF2-GDP binary complex. In order for eIF2 to recycle and catalyze another round of initiation, the GDP bound to eIF2 must exchange with GTP by way of a reaction catalyzed by eIF2B. The sequence is that of Eukaryotic translation initiation factor 2 subunit beta from Triticum aestivum (Wheat).